We begin with the raw amino-acid sequence, 224 residues long: 7-cyano-7-deazaguanine synthase (224 aa).

8–18 (VSGGADSATVL) contacts ATP. Zn(2+)-binding residues include cysteine 189, cysteine 199, cysteine 202, and cysteine 205.

This sequence belongs to the QueC family. Zn(2+) is required as a cofactor.

It carries out the reaction 7-carboxy-7-deazaguanine + NH4(+) + ATP = 7-cyano-7-deazaguanine + ADP + phosphate + H2O + H(+). It functions in the pathway purine metabolism; 7-cyano-7-deazaguanine biosynthesis. Its function is as follows. Catalyzes the ATP-dependent conversion of 7-carboxy-7-deazaguanine (CDG) to 7-cyano-7-deazaguanine (preQ(0)). The protein is 7-cyano-7-deazaguanine synthase of Rickettsia felis (strain ATCC VR-1525 / URRWXCal2) (Rickettsia azadi).